The following is a 422-amino-acid chain: Enolase (422 aa).

Q162 is a (2R)-2-phosphoglycerate binding site. The active-site Proton donor is E204. Positions 241, 285, and 312 each coordinate Mg(2+). Residues K337, R366, S367, and K388 each contribute to the (2R)-2-phosphoglycerate site. The active-site Proton acceptor is the K337.

The protein belongs to the enolase family. It depends on Mg(2+) as a cofactor.

The protein resides in the cytoplasm. It localises to the secreted. It is found in the cell surface. The enzyme catalyses (2R)-2-phosphoglycerate = phosphoenolpyruvate + H2O. The protein operates within carbohydrate degradation; glycolysis; pyruvate from D-glyceraldehyde 3-phosphate: step 4/5. In terms of biological role, catalyzes the reversible conversion of 2-phosphoglycerate (2-PG) into phosphoenolpyruvate (PEP). It is essential for the degradation of carbohydrates via glycolysis. This is Enolase from Streptococcus thermophilus.